The primary structure comprises 432 residues: MGSCSLQLPLINLADKTLEPGSSKWAEVRSDVRKALQDFGCFEASYDKVSLELQESIMKTMEELFALPVETKQRNVCPKPYVGYLNHNNLSESLGISNANILENINEFTQQLWPHGDGNENISKTIQLFAEKLVEIDVMVRRMVMESFGIEKYIDDHLKSTEYRMRLMKYIAPPEGDANTTVDDYADLLAKLNIDGVEPNVGVKVNADISDDVNANPSVNAGVGANVNADTGVNDNLNVDAEANGDANIAVGGGVNANTDLGVGVNVNSNVAVNAKTGATSGDDVEANDDNEEKKLGLPCHTDKNLFTVLFQHEIEGLEVKTKDEKWIRVKPSPNTFIVIAGDSLCALMNGRIRAPYHRVRVTEKKRTRYTAAIFTCPKPDYVIEAPKELVDEKHPRLFRPFDYRDLFTFYHSEAGRKIQYTLQAYCAVSEA.

Residues 281–378 (SGDDVEANDD…RYTAAIFTCP (98 aa)) enclose the Fe2OG dioxygenase domain. Residues H301, D303, and H358 each contribute to the Fe cation site. Residue R369 participates in 2-oxoglutarate binding.

Belongs to the iron/ascorbate-dependent oxidoreductase family. Fe(2+) is required as a cofactor.

2-oxoglutarate-dependent dioxygenase involved in glucosinolates biosynthesis. Catalyzes the conversion of methylsulfinylalkyl glucosinolates to alkenyl glucosinolates. In Arabidopsis thaliana (Mouse-ear cress), this protein is 2-oxoglutarate-dependent dioxygenase AOP2 (AOP2).